The sequence spans 105 residues: Large ribosomal subunit protein uL24 (105 aa).

It belongs to the universal ribosomal protein uL24 family. As to quaternary structure, part of the 50S ribosomal subunit.

One of two assembly initiator proteins, it binds directly to the 5'-end of the 23S rRNA, where it nucleates assembly of the 50S subunit. In terms of biological role, one of the proteins that surrounds the polypeptide exit tunnel on the outside of the subunit. In Vibrio parahaemolyticus serotype O3:K6 (strain RIMD 2210633), this protein is Large ribosomal subunit protein uL24.